The primary structure comprises 390 residues: Sulfate adenylyltransferase (390 aa).

It belongs to the sulfate adenylyltransferase family.

The catalysed reaction is sulfate + ATP + H(+) = adenosine 5'-phosphosulfate + diphosphate. It functions in the pathway sulfur metabolism; hydrogen sulfide biosynthesis; sulfite from sulfate: step 1/3. The protein is Sulfate adenylyltransferase (sat) of Synechocystis sp. (strain ATCC 27184 / PCC 6803 / Kazusa).